Consider the following 378-residue polypeptide: MTQSIMRYKDFFSEKTQFANFKTPLTLEFGGTLPEYRVAYRSWGKLNKSGDNAILICHALTGSADADIWWAPLFGEGKTFDETKDFIVCSNVLGSCYGTTGPASINPETGKRFGPDFPSFTIRDMVRVQRSLLNALGVKKLKMVIGGSLGGMQALEWCAMYPDFVETQVTIASSGKHSAWCIGLSEAQRQAICADENWNGGHYTPENPPKNGLSAARMIAMCTYRTRASFETRFARSLRAKETFNVESYLLYQGEKLVERFDANAYVKLTQAMDKHDLSRNRGDYYNVLKSIDIPSLIVAINSDILYPQEEQEELVRFMPNAQFGMLYSQHGHDTFLIEMEALNKLVMAFQKQLPPEGKFLNDRSPIVSTIFGSKLGV.

The AB hydrolase-1 domain occupies 52–337; it reads NAILICHALT…YSQHGHDTFL (286 aa). Ser148 functions as the Nucleophile in the catalytic mechanism. A substrate-binding site is contributed by Arg217. Active-site residues include Asp304 and His333. Asp334 serves as a coordination point for substrate.

This sequence belongs to the AB hydrolase superfamily. MetX family. Homodimer.

The protein localises to the cytoplasm. It carries out the reaction L-homoserine + acetyl-CoA = O-acetyl-L-homoserine + CoA. It participates in amino-acid biosynthesis; L-methionine biosynthesis via de novo pathway; O-acetyl-L-homoserine from L-homoserine: step 1/1. In terms of biological role, transfers an acetyl group from acetyl-CoA to L-homoserine, forming acetyl-L-homoserine. The polypeptide is Homoserine O-acetyltransferase (Chloroherpeton thalassium (strain ATCC 35110 / GB-78)).